Here is a 376-residue protein sequence, read N- to C-terminus: Protein-glutamate methylesterase/protein-glutamine glutaminase 1 (376 aa).

Positions 4–121 constitute a Response regulatory domain; it reads KVLVVDDSSF…ARNRDEAVSL (118 aa). Asp55 is subject to 4-aspartylphosphate. A disordered region spans residues 138-174; it reads RPVASSTPVQERPQSTLNRPTTGLRREAPAQAPVSRA. Residues 141 to 158 are compositionally biased toward polar residues; that stretch reads ASSTPVQERPQSTLNRPT. A CheB-type methylesterase domain is found at 183–376; sequence SGKKYQLTAI…ERMLVEVGLA (194 aa). Active-site residues include Ser195, His222, and Asp318.

The protein belongs to the CheB family. Phosphorylated by CheA. Phosphorylation of the N-terminal regulatory domain activates the methylesterase activity.

It is found in the cytoplasm. It catalyses the reaction [protein]-L-glutamate 5-O-methyl ester + H2O = L-glutamyl-[protein] + methanol + H(+). The enzyme catalyses L-glutaminyl-[protein] + H2O = L-glutamyl-[protein] + NH4(+). Its function is as follows. Involved in chemotaxis. Part of a chemotaxis signal transduction system that modulates chemotaxis in response to various stimuli. Catalyzes the demethylation of specific methylglutamate residues introduced into the chemoreceptors (methyl-accepting chemotaxis proteins or MCP) by CheR. Also mediates the irreversible deamidation of specific glutamine residues to glutamic acid. This Vibrio vulnificus (strain CMCP6) protein is Protein-glutamate methylesterase/protein-glutamine glutaminase 1.